The sequence spans 473 residues: 6-phospho-beta-glucosidase (473 aa).

Glu174 serves as the catalytic Proton donor. Glu366 acts as the Nucleophile in catalysis.

The protein belongs to the glycosyl hydrolase 1 family.

The enzyme catalyses 6-phospho-beta-D-glucosyl-(1-&gt;4)-D-glucose + H2O = D-glucose 6-phosphate + D-glucose. This Clostridium longisporum protein is 6-phospho-beta-glucosidase (abgA).